The chain runs to 356 residues: S-adenosylmethionine:tRNA ribosyltransferase-isomerase (356 aa).

Belongs to the QueA family. As to quaternary structure, monomer.

The protein resides in the cytoplasm. The enzyme catalyses 7-aminomethyl-7-carbaguanosine(34) in tRNA + S-adenosyl-L-methionine = epoxyqueuosine(34) in tRNA + adenine + L-methionine + 2 H(+). It participates in tRNA modification; tRNA-queuosine biosynthesis. Transfers and isomerizes the ribose moiety from AdoMet to the 7-aminomethyl group of 7-deazaguanine (preQ1-tRNA) to give epoxyqueuosine (oQ-tRNA). This Escherichia coli O81 (strain ED1a) protein is S-adenosylmethionine:tRNA ribosyltransferase-isomerase.